Here is a 197-residue protein sequence, read N- to C-terminus: Phosphoheptose isomerase (197 aa).

Residues 34 to 196 (MVHCLLSGNK…DHTLFPQDEQ (163 aa)) form the SIS domain. 49 to 51 (NGG) serves as a coordination point for substrate. Residues His-58 and Glu-62 each coordinate Zn(2+). Substrate is bound by residues Glu-62, 91 to 92 (ND), 117 to 119 (STS), Ser-122, and Gln-172. Zn(2+) contacts are provided by Gln-172 and His-180.

It belongs to the SIS family. GmhA subfamily. As to quaternary structure, homotetramer. Zn(2+) serves as cofactor.

The protein localises to the cytoplasm. It catalyses the reaction 2 D-sedoheptulose 7-phosphate = D-glycero-alpha-D-manno-heptose 7-phosphate + D-glycero-beta-D-manno-heptose 7-phosphate. The protein operates within carbohydrate biosynthesis; D-glycero-D-manno-heptose 7-phosphate biosynthesis; D-glycero-alpha-D-manno-heptose 7-phosphate and D-glycero-beta-D-manno-heptose 7-phosphate from sedoheptulose 7-phosphate: step 1/1. Functionally, catalyzes the isomerization of sedoheptulose 7-phosphate in D-glycero-D-manno-heptose 7-phosphate. This Shewanella halifaxensis (strain HAW-EB4) protein is Phosphoheptose isomerase.